The sequence spans 2531 residues: Probable polyketide synthase 26 (2531 aa).

The 424-residue stretch at 10–433 (QEDIAIIGFR…GSNCCLVLTE (424 aa)) folds into the Ketosynthase family 3 (KS3) domain. Residues Cys-174, His-316, and His-356 each act as for beta-ketoacyl synthase activity in the active site. The tract at residues 620 to 653 (GINPSFIVGHSLGELPMAFCSGMIDFDTVCYLLY) is acyl/malonyl transferase. Residue Ser-630 is the For acyl/malonyl transferase activity of the active site. The interval 915 to 1036 (MDTLGFSNEK…ANYHLSHRDD (122 aa)) is N-terminal hotdog fold. The PKS/mFAS DH domain maps to 915 to 1206 (MDTLGFSNEK…LKSLIPLKDP (292 aa)). His-948 serves as the catalytic Proton acceptor; for dehydratase activity. The segment at 1055-1206 (NLTKLSKNQF…LKSLIPLKDP (152 aa)) is C-terminal hotdog fold. Asp-1117 (proton donor; for dehydratase activity) is an active-site residue. Residues 2431–2509 (ASENPVKDLL…DNIKILTDSY (79 aa)) form the Carrier domain. Ser-2468 carries the O-(pantetheine 4'-phosphoryl)serine modification.

Pantetheine 4'-phosphate is required as a cofactor.

Functionally, probable polyketide synthase. The polypeptide is Probable polyketide synthase 26 (pks26) (Dictyostelium discoideum (Social amoeba)).